A 389-amino-acid chain; its full sequence is Glutamate 5-kinase (389 aa).

ATP is bound at residue Lys-16. Residues Ser-56, Asp-143, and Asn-155 each contribute to the substrate site. Residue 175-176 coordinates ATP; that stretch reads SD. Residues 281 to 358 enclose the PUA domain; that stretch reads AGELHVDDGA…AEIETILGYP (78 aa).

The protein belongs to the glutamate 5-kinase family.

The protein resides in the cytoplasm. The catalysed reaction is L-glutamate + ATP = L-glutamyl 5-phosphate + ADP. The protein operates within amino-acid biosynthesis; L-proline biosynthesis; L-glutamate 5-semialdehyde from L-glutamate: step 1/2. In terms of biological role, catalyzes the transfer of a phosphate group to glutamate to form L-glutamate 5-phosphate. This chain is Glutamate 5-kinase, found in Rhizobium johnstonii (strain DSM 114642 / LMG 32736 / 3841) (Rhizobium leguminosarum bv. viciae).